Consider the following 322-residue polypeptide: Acetylglutamate kinase (322 aa).

Substrate is bound by residues 89-90, Arg111, and Asn217; that span reads GG.

The protein belongs to the acetylglutamate kinase family. ArgB subfamily.

The protein resides in the cytoplasm. The enzyme catalyses N-acetyl-L-glutamate + ATP = N-acetyl-L-glutamyl 5-phosphate + ADP. It participates in amino-acid biosynthesis; L-arginine biosynthesis; N(2)-acetyl-L-ornithine from L-glutamate: step 2/4. Functionally, catalyzes the ATP-dependent phosphorylation of N-acetyl-L-glutamate. This is Acetylglutamate kinase from Ehrlichia ruminantium (strain Gardel).